The chain runs to 2999 residues: TPR and ankyrin repeat-containing protein 1 (2999 aa).

The disordered stretch occupies residues 1–87 (MASTTAGRRW…QPRGSTDSAC (87 aa)). Over residues 19–36 (RGPTPRSRAPGAKLSAPE) the composition is skewed to low complexity. TPR repeat units lie at residues 144–177 (AMLLCNKSNAFYNLGKWNEAFLAAKECLQWDPTY) and 179–211 (KGYYRAGYSLLHLLQPYEAARMFFEGLRLLQRS). ANK repeat units lie at residues 297-327 (EKYVFIGFYEKLEQVPKLVQWLVSIGANIET), 328-361 (IGPNPLHALMRLCIQARESQLFRWVMDQKPEWKE), 369-405 (AGCTVLHVAAAHFPGYTSRRQTEDVQMLLSFGADPTL), 538-567 (SQDRPLLMCLRHEDFDLAFLLLTKGADPRS), 572-593 (EGDTPLHAALHIFLDINADIGF), and 621-654 (NGNTLMHLLFQKGMLKRTKKLIDLLVKFDINFNL). 4 disordered regions span residues 684–722 (RRKNRQDPAAHLGRLSRSSAPGHTSQLKSQTSFKSLPCG), 773–831 (MPLP…GASQ), 1151–1211 (LEVE…GCVP), and 1318–1344 (WEEDDEEVEADGNYNEEEKATETQTGD). Composition is skewed to polar residues over residues 699–717 (SRSSAPGHTSQLKSQTSFK) and 801–815 (TQRMGSSGCSGNNPV). A compositionally biased stretch (basic and acidic residues) spans 1151-1164 (LEVEPGKEGPGREE). Over residues 1318–1327 (WEEDDEEVEA) the composition is skewed to acidic residues. 2 TPR repeats span residues 1772-1805 (PYEWIIQGDYYAKHQCWKVAAKCYQKGDALEKEK) and 1866-1899 (LGKIRDAAYFYKRSQCFQDAFRCFEQIQEFDLAL).

In terms of tissue distribution, expressed only in the brain. Detected in the hippocampus, hypothalamus and cingulate gyrus.

The chain is TPR and ankyrin repeat-containing protein 1 (Trank1) from Mus musculus (Mouse).